The following is a 364-amino-acid chain: MAQRWDPQRLAGGQPQDSHEDSTQSSIFTYTNSNATRGPFEGPNYHIAPRWVYHITSTWMIIVVIASVFTNGLVLVATMKFKKLRHPLNWILVNLAIADLAETVIASTISVVNQLYGYFVLGHPLCVVEGYTVSVCGITGLWSLAIISWERWLVVCKPFGNMRFDAKLAIVGIAFSWIWSAVWTAPPIFGWSRYWPYGLKTSCGPDVFSGTSYPGVQSYMMVLMVTCCIIPLSIIILCYLQVWLAIRAVAKQQKESESTQKAEKEVTRMVVVMVFAYCLCWGPYTFFACFATANPGYAFHPLVAALPAYFAKSATIYNPIIYVFMNRQFRNCILQLFGKKVDDTSELSSASKTEASSVSSVSPA.

The tract at residues 1–24 (MAQRWDPQRLAGGQPQDSHEDSTQ) is disordered. At 1 to 52 (MAQRWDPQRLAGGQPQDSHEDSTQSSIFTYTNSNATRGPFEGPNYHIAPRWV) the chain is on the extracellular side. The segment at 17–43 (DSHEDSTQSSIFTYTNSNATRGPFEGP) is required for 11-cis-retinal regeneration. The N-linked (GlcNAc...) asparagine glycan is linked to asparagine 34. Residues 53 to 77 (YHITSTWMIIVVIASVFTNGLVLVA) traverse the membrane as a helical segment. Residues 78-89 (TMKFKKLRHPLN) are Cytoplasmic-facing. Residues 90-115 (WILVNLAIADLAETVIASTISVVNQL) form a helical membrane-spanning segment. The Extracellular portion of the chain corresponds to 116–129 (YGYFVLGHPLCVVE). Cysteines 126 and 203 form a disulfide. The helical transmembrane segment at 130–149 (GYTVSVCGITGLWSLAIISW) threads the bilayer. The Cytoplasmic portion of the chain corresponds to 150 to 168 (ERWLVVCKPFGNMRFDAKL). Residues 169-192 (AIVGIAFSWIWSAVWTAPPIFGWS) traverse the membrane as a helical segment. Over 193 to 218 (RYWPYGLKTSCGPDVFSGTSYPGVQS) the chain is Extracellular. Residues 219–246 (YMMVLMVTCCIIPLSIIILCYLQVWLAI) form a helical membrane-spanning segment. The Cytoplasmic portion of the chain corresponds to 247–268 (RAVAKQQKESESTQKAEKEVTR). Residues 269–292 (MVVVMVFAYCLCWGPYTFFACFAT) traverse the membrane as a helical segment. Topologically, residues 293-300 (ANPGYAFH) are extracellular. A helical transmembrane segment spans residues 301–320 (PLVAALPAYFAKSATIYNPI). At lysine 312 the chain carries N6-(retinylidene)lysine. The Cytoplasmic portion of the chain corresponds to 321 to 364 (IYVFMNRQFRNCILQLFGKKVDDTSELSSASKTEASSVSSVSPA).

This sequence belongs to the G-protein coupled receptor 1 family. Opsin subfamily. As to quaternary structure, monomer. Homodimer. Homotetramer. In terms of processing, O-glycosylated. Post-translationally, phosphorylated on some or all of the serine and threonine residues present in the C-terminal region. As to expression, expressed in cone photoreceptor cells.

The protein localises to the membrane. Functionally, visual pigments are the light-absorbing molecules that mediate vision. They consist of an apoprotein, opsin, covalently linked to cis-retinal. May increase spectral sensitivity in dim light. The sequence is that of Medium-wave-sensitive opsin 1 (OPN1MW) from Sciurus carolinensis (Eastern gray squirrel).